Consider the following 345-residue polypeptide: Homeobox protein DBX1 (345 aa).

2 disordered regions span residues 55 to 103 (PRGS…VSPA) and 241 to 345 (KERE…ITVS). The homeobox DNA-binding region spans 182–241 (GMLRRAVFSDVQRKALEKMFQKQKYISKPDRKKLAAKLGLKDSQVKIWFQNRRMKWRNSK). Over residues 300–309 (DPRHLRDPRL) the composition is skewed to basic and acidic residues. The segment covering 330-345 (SDSEDDEEGEEEITVS) has biased composition (acidic residues).

This sequence belongs to the H2.0 homeobox family.

It is found in the nucleus. Could have a role in patterning the central nervous system during embryogenesis. Has a key role in regulating the distinct phenotypic features that distinguish two major classes of ventral interneurons, V0 and V1 neurons. Regulates the transcription factor profile, neurotransmitter phenotype, intraspinal migratory path and axonal trajectory of V0 neurons, features that differentiate them from an adjacent set of V1 neurons. The chain is Homeobox protein DBX1 (DBX1) from Bos taurus (Bovine).